Reading from the N-terminus, the 435-residue chain is Serine--tRNA ligase (435 aa).

Position 241–243 (241–243) interacts with L-serine; the sequence is TAE. 272–274 contacts ATP; sequence RAE. E295 serves as a coordination point for L-serine. Residue 359–362 coordinates ATP; that stretch reads EISS. S395 contacts L-serine.

It belongs to the class-II aminoacyl-tRNA synthetase family. Type-1 seryl-tRNA synthetase subfamily. In terms of assembly, homodimer. The tRNA molecule binds across the dimer.

The protein localises to the cytoplasm. The enzyme catalyses tRNA(Ser) + L-serine + ATP = L-seryl-tRNA(Ser) + AMP + diphosphate + H(+). It carries out the reaction tRNA(Sec) + L-serine + ATP = L-seryl-tRNA(Sec) + AMP + diphosphate + H(+). The protein operates within aminoacyl-tRNA biosynthesis; selenocysteinyl-tRNA(Sec) biosynthesis; L-seryl-tRNA(Sec) from L-serine and tRNA(Sec): step 1/1. Functionally, catalyzes the attachment of serine to tRNA(Ser). Is also able to aminoacylate tRNA(Sec) with serine, to form the misacylated tRNA L-seryl-tRNA(Sec), which will be further converted into selenocysteinyl-tRNA(Sec). The chain is Serine--tRNA ligase from Haemophilus ducreyi (strain 35000HP / ATCC 700724).